A 216-amino-acid polypeptide reads, in one-letter code: Transmembrane emp24 domain-containing protein p24delta5 (216 aa).

A signal peptide spans 1–27 (MAINRIAHGSLFLTVVLFFLTVNYGEA). The Lumenal segment spans residues 28-183 (IWLTIPTTGG…REVSETTNSR (156 aa)). A GOLD domain is found at 38-151 (TKCVSEEIQS…IEGVELQLRR (114 aa)). N-linked (GlcNAc...) asparagine glycosylation is present at N86. Residues 137–159 (AKKEKIEGVELQLRRLEGLVLSI) are a coiled coil. R169 and R174 each carry omega-N-methylated arginine. A helical transmembrane segment spans residues 184–204 (VAWFSIMSLGVCVVVVGSQIL). Residues 205–216 (YLKRYFHKKKLI) are Cytoplasmic-facing. The short motif at 209–210 (YF) is the COPII vesicle coat-binding element. Positions 209–216 (YFHKKKLI) match the COPI vesicle coat-binding motif.

It belongs to the EMP24/GP25L family. In terms of assembly, probably oligomerizes with other members of the EMP24/GP25L family. Associates with the COPI vesicle coat (coatomer). Associates with the COPII vesicle coat (coatomer). Interacts with p24beta2.

It localises to the endoplasmic reticulum membrane. Involved in vesicular protein trafficking. Mainly functions in the early secretory pathway. Thought to act as cargo receptor at the lumenal side for incorporation of secretory cargo molecules into transport vesicles and to be involved in vesicle coat formation at the cytoplasmic side. Interacts with p24beta2 at endoplasmic reticulum export sites for endoplasmic reticulum exit and coupled transport to the Golgi apparatus. Once in the Golgi, interacts very efficiently with the COPI machinery for retrograde transport back to the endoplasmic reticulum. The chain is Transmembrane emp24 domain-containing protein p24delta5 from Arabidopsis thaliana (Mouse-ear cress).